Consider the following 1330-residue polypeptide: ABC multidrug transporter mdr4 (1330 aa).

N3 carries an N-linked (GlcNAc...) asparagine glycan. 6 helical membrane passes run 90–110, 144–164, 218–238, 243–263, 324–344, and 370–390; these read VLLI…FPLL, VLYV…HSTC, KVGL…VAFI, IAGM…GGGH, HAAQ…LAFW, and IFVL…IHVF. The 299-residue stretch at 94 to 392 folds into the ABC transmembrane type-1 1 domain; the sequence is IGGLLFAICA…VAPFIHVFAS (299 aa). In terms of domain architecture, ABC transporter 1 spans 428-666; it reads IRFRDVHFKY…GGVYAEMVRL (239 aa). Residue 463 to 470 coordinates ATP; the sequence is GPSGGGKS. N-linked (GlcNAc...) asparagine glycosylation occurs at N707. The segment at 717–736 is disordered; the sequence is VADTPSDSRDGSEEEARKKR. Basic and acidic residues predominate over residues 722–733; that stretch reads SDSRDGSEEEAR. The next 6 membrane-spanning stretches (helical) occupy residues 761-781, 806-826, 871-893, 903-923, 989-1009, and 1023-1043; these read LLGL…AIVF, LLFF…GCAF, ASAL…VNLI, AWKI…SGMM, AWLA…YWWG, and FFIV…MFAL. In terms of domain architecture, ABC transmembrane type-1 2 spans 761–1049; sequence LLGLAMSVII…MFALAPDISK (289 aa). The ABC transporter 2 domain occupies 1086-1325; that stretch reads AQLRDVHFTY…SETYRTSVIH (240 aa). 1121-1128 lines the ATP pocket; the sequence is GPSGSGKS.

Belongs to the ABC transporter superfamily. ABCB family. Multidrug resistance exporter (TC 3.A.1.201) subfamily.

It is found in the cell membrane. The catalysed reaction is itraconazole(in) + ATP + H2O = itraconazole(out) + ADP + phosphate + H(+). It catalyses the reaction voriconazole(in) + ATP + H2O = voriconazole(out) + ADP + phosphate + H(+). In terms of biological role, pleiotropic ABC efflux transporter that confers resistance to azoles such as itraconazole and voriconazole. This Aspergillus fumigatus (strain ATCC MYA-4609 / CBS 101355 / FGSC A1100 / Af293) (Neosartorya fumigata) protein is ABC multidrug transporter mdr4.